A 270-amino-acid polypeptide reads, in one-letter code: A-type potassium channel modulatory protein KCNIP2 (270 aa).

Positions 1 to 17 (MRGQGRKESLSESRDLD) are enriched in basic and acidic residues. The tract at residues 1 to 34 (MRGQGRKESLSESRDLDGSYDQLTGHPPGPSKKA) is disordered. The residue at position 9 (serine 9) is a Phosphoserine. S-palmitoyl cysteine attachment occurs at residues cysteine 45 and cysteine 46. The EF-hand 1; degenerate domain occupies 81–137 (FELSTVCHRPEGLEQLQEQTKFTRRELQVLYRGFKNECPSGIVNEENFKQIYSQFFP). 3 EF-hand domains span residues 140 to 175 (DSSNYATFLFNAFDTNHDGSVSFEDFVAGLSVILRG), 176 to 211 (TIDDRLSWAFNLYDLNKDGCITKEEMLDIMKSIYDM), and 224 to 259 (APREHVESFFQKMDRNKDGVVTIEEFIESCQQDENI). 14 residues coordinate Ca(2+): aspartate 153, asparagine 155, aspartate 157, serine 159, aspartate 164, aspartate 189, asparagine 191, aspartate 193, cysteine 195, glutamate 200, aspartate 237, asparagine 239, aspartate 241, and glutamate 248. Positions 257-270 (ENIMRSMQLFDNVI) are interaction with KCND2.

The protein belongs to the recoverin family. Component of heteromultimeric potassium channels. Identified in potassium channel complexes containing KCND1, KCND2, KCND3, KCNIP1, KCNIP2, KCNIP3, KCNIP4, DPP6 and DPP10. The KCND2-KCNIP2 channel complex contains four KCND2 and four KCNIP2 subunits. Interacts with KCND2. Probably part of a complex consisting of KCNIP1, KCNIP2 isoform 3 and KCND2. At least isoform 2 and isoform 3 can self-associate to form homodimers and homotetramers. Isoform 3 interacts with KCNIP1 in a calcium-dependent manner. Interacts with KCND3; each KCNIP2 monomer interacts with two adjacent KCND3 subunits, through both the N-terminal inactivation ball of a KCND3 subunit and a C-terminal helix from the adjacent KCND3 subunit, clamping them together; this interaction modulates the channel gating kinetics. In terms of processing, palmitoylated. Palmitoylation enhances association with the plasma membrane. Expressed in heart, brain and lung. In brain, abundantly expressed in striatum, hippocampus and olfactory bulb, moderately expressed in cerebral cortex and lowly expressed in thalamus and hypothalamus. Isoform 1 is predominant in cerebral cortex, striatum and hippocampus. Isoform 1, isoform 2 and isoform 3 are equally expressed in olfactory bulb. Iisoform 3 is expressed at high levels and isoform 1 at low levels in heart (in PubMed:11263977).

Its subcellular location is the cell membrane. Its function is as follows. Regulatory subunit of Kv4/D (Shal)-type voltage-gated rapidly inactivating A-type potassium channels. Modulates channel density, inactivation kinetics and rate of recovery from inactivation in a calcium-dependent and isoform-specific manner. Involved in KCND2 and KCND3 trafficking to the cell surface. Essential for the expression of I(To) currents in the heart. Required for normal protein levels of KCND2 in the heart ventricle. This Rattus norvegicus (Rat) protein is A-type potassium channel modulatory protein KCNIP2.